Reading from the N-terminus, the 87-residue chain is Small ribosomal subunit protein bS18 (87 aa).

The segment covering 1–10 has biased composition (basic and acidic residues); sequence MAGKSSGDRR. The tract at residues 1–23 is disordered; the sequence is MAGKSSGDRRKPLRGAKGGKNAA.

The protein belongs to the bacterial ribosomal protein bS18 family. In terms of assembly, part of the 30S ribosomal subunit. Forms a tight heterodimer with protein bS6.

In terms of biological role, binds as a heterodimer with protein bS6 to the central domain of the 16S rRNA, where it helps stabilize the platform of the 30S subunit. In Clavibacter michiganensis subsp. michiganensis (strain NCPPB 382), this protein is Small ribosomal subunit protein bS18.